Reading from the N-terminus, the 348-residue chain is Nicotinate-nucleotide--dimethylbenzimidazole phosphoribosyltransferase (348 aa).

The active-site Proton acceptor is Glu-316.

It belongs to the CobT family.

It catalyses the reaction 5,6-dimethylbenzimidazole + nicotinate beta-D-ribonucleotide = alpha-ribazole 5'-phosphate + nicotinate + H(+). It participates in nucleoside biosynthesis; alpha-ribazole biosynthesis; alpha-ribazole from 5,6-dimethylbenzimidazole: step 1/2. Functionally, catalyzes the synthesis of alpha-ribazole-5'-phosphate from nicotinate mononucleotide (NAMN) and 5,6-dimethylbenzimidazole (DMB). This chain is Nicotinate-nucleotide--dimethylbenzimidazole phosphoribosyltransferase, found in Xanthomonas campestris pv. campestris (strain 8004).